The chain runs to 195 residues: Segregation and condensation protein B (195 aa).

The protein belongs to the ScpB family. As to quaternary structure, homodimer. Homodimerization may be required to stabilize the binding of ScpA to the Smc head domains. Component of a cohesin-like complex composed of ScpA, ScpB and the Smc homodimer, in which ScpA and ScpB bind to the head domain of Smc. The presence of the three proteins is required for the association of the complex with DNA.

The protein localises to the cytoplasm. In terms of biological role, participates in chromosomal partition during cell division. May act via the formation of a condensin-like complex containing Smc and ScpA that pull DNA away from mid-cell into both cell halves. This chain is Segregation and condensation protein B, found in Clostridium perfringens (strain SM101 / Type A).